We begin with the raw amino-acid sequence, 229 residues long: Large ribosomal subunit protein uL1 (229 aa).

It belongs to the universal ribosomal protein uL1 family. Part of the 50S ribosomal subunit.

Binds directly to 23S rRNA. The L1 stalk is quite mobile in the ribosome, and is involved in E site tRNA release. Its function is as follows. Protein L1 is also a translational repressor protein, it controls the translation of the L11 operon by binding to its mRNA. This Streptococcus suis (strain 98HAH33) protein is Large ribosomal subunit protein uL1.